The sequence spans 430 residues: Crotonyl-CoA carboxylase/reductase (430 aa).

It belongs to the zinc-containing alcohol dehydrogenase family. Crotonyl-CoA carboxylase/reductase subfamily. As to quaternary structure, homodimer. It depends on Despite some sequence similarity to zinc-containing alcohol dehydrogenases, this enzyme does not bind any metals. as a cofactor.

It carries out the reaction (2S)-ethylmalonyl-CoA + NADP(+) = (2E)-butenoyl-CoA + CO2 + NADPH. It catalyses the reaction (S)-methylmalonyl-CoA + NADP(+) = acryloyl-CoA + CO2 + NADPH. The catalysed reaction is butanoyl-CoA + NADP(+) = (2E)-butenoyl-CoA + NADPH + H(+). Its function is as follows. Catalyzes the NADPH-dependent reductive carboxylation of crotonyl-CoA ((2E)-butenoyl-CoA) to (2S)-ethylmalonyl-CoA, in the presence of CO2. This is a key reaction in the ethylmalonyl-CoA pathway for acetyl-CoA assimilation required for R.sphaeroides growth on acetate as sole carbon source. Is also able to accept acryloyl-CoA as an alternative substrate, yielding (2S)-methylmalonyl-CoA. To a lesser extent, when CO2 is absent, the enzyme also catalyzes the reduction of crotonyl-CoA to butanoyl-CoA. The polypeptide is Crotonyl-CoA carboxylase/reductase (Cereibacter sphaeroides (strain ATCC 17023 / DSM 158 / JCM 6121 / CCUG 31486 / LMG 2827 / NBRC 12203 / NCIMB 8253 / ATH 2.4.1.) (Rhodobacter sphaeroides)).